We begin with the raw amino-acid sequence, 95 residues long: Putative monooxygenase YcnE (95 aa).

Residues 2–93 (IVLQAYIKVK…APLDVVRTEL (92 aa)) form the ABM domain. Position 24 is a phosphoserine (Ser-24).

It belongs to the LsrG family.

Functionally, putative monooxygenase that may contribute to the degradation of aromatic compounds. The chain is Putative monooxygenase YcnE (ycnE) from Bacillus subtilis (strain 168).